The chain runs to 41 residues: Large ribosomal subunit protein bL36 (41 aa).

Belongs to the bacterial ribosomal protein bL36 family.

The sequence is that of Large ribosomal subunit protein bL36 from Edwardsiella ictaluri (strain 93-146).